The following is a 340-amino-acid chain: DNA-directed RNA polymerase subunit alpha (340 aa).

Residues 1–236 (MLSLSKNWNT…EQLQLFISFE (236 aa)) form an alpha N-terminal domain (alpha-NTD) region. Positions 251-340 (FSPYLLKRVD…LSKRYEDSYN (90 aa)) are alpha C-terminal domain (alpha-CTD).

It belongs to the RNA polymerase alpha chain family. As to quaternary structure, homodimer. The RNAP catalytic core consists of 2 alpha, 1 beta, 1 beta' and 1 omega subunit. When a sigma factor is associated with the core the holoenzyme is formed, which can initiate transcription.

It catalyses the reaction RNA(n) + a ribonucleoside 5'-triphosphate = RNA(n+1) + diphosphate. Its function is as follows. DNA-dependent RNA polymerase catalyzes the transcription of DNA into RNA using the four ribonucleoside triphosphates as substrates. This chain is DNA-directed RNA polymerase subunit alpha, found in Rickettsia rickettsii (strain Iowa).